The following is a 706-amino-acid chain: Translation initiation factor IF-2 (706 aa).

The segment covering 55–81 (AKETANEKPAEQKKQSSNKINDRKKND) has biased composition (basic and acidic residues). The disordered stretch occupies residues 55–127 (AKETANEKPA…KPKKELPEKI (73 aa)). The segment covering 82 to 98 (VQNNQFNKNKKNNNQNK) has biased composition (low complexity). Residues 207 to 376 (VRPPVVTIMG…LLVSEVGELK (170 aa)) enclose the tr-type G domain. The segment at 216–223 (GHVDHGKT) is G1. GTP is bound at residue 216 to 223 (GHVDHGKT). A G2 region spans residues 241–245 (GITQH). A G3 region spans residues 262–265 (DTPG). GTP-binding positions include 262–266 (DTPGH) and 316–319 (NKID). Residues 316–319 (NKID) form a G4 region. The tract at residues 352 to 354 (SAK) is G5.

It belongs to the TRAFAC class translation factor GTPase superfamily. Classic translation factor GTPase family. IF-2 subfamily.

The protein localises to the cytoplasm. Functionally, one of the essential components for the initiation of protein synthesis. Protects formylmethionyl-tRNA from spontaneous hydrolysis and promotes its binding to the 30S ribosomal subunits. Also involved in the hydrolysis of GTP during the formation of the 70S ribosomal complex. The chain is Translation initiation factor IF-2 from Bacillus pumilus (strain SAFR-032).